We begin with the raw amino-acid sequence, 229 residues long: Type-5 uracil-DNA glycosylase (229 aa).

The [4Fe-4S] cluster site is built by cysteine 19, cysteine 22, cysteine 123, and cysteine 138.

The protein belongs to the uracil-DNA glycosylase (UDG) superfamily. Type 5 (UDGb) family.

DNA glycosylase with broad substrate specificity. This chain is Type-5 uracil-DNA glycosylase, found in Mycobacterium leprae (strain TN).